Reading from the N-terminus, the 527-residue chain is EGF domain-specific O-linked N-acetylglucosamine transferase (527 aa).

An N-terminal signal peptide occupies residues 1-19 (MLMLLVFGVLLHEVPLSGQ). The short motif at 295–297 (DYD) is the Required for optimal activity element. Asn-354 carries an N-linked (GlcNAc...) asparagine glycan. A Prevents secretion from ER motif is present at residues 524-527 (HDEL).

The protein belongs to the glycosyltransferase 61 family. Widely expressed. Expressed in brain, heart, kidney, lung, skeletal muscles and thymus. Highest expression is observed in lung and the lowest in skeletal muscles.

It localises to the endoplasmic reticulum lumen. It carries out the reaction L-seryl-[protein] + UDP-N-acetyl-alpha-D-glucosamine = 3-O-(N-acetyl-beta-D-glucosaminyl)-L-seryl-[protein] + UDP + H(+). It catalyses the reaction L-threonyl-[protein] + UDP-N-acetyl-alpha-D-glucosamine = 3-O-(N-acetyl-beta-D-glucosaminyl)-L-threonyl-[protein] + UDP + H(+). Its function is as follows. Catalyzes the transfer of a single N-acetylglucosamine from UDP-GlcNAc to a serine or threonine residue in extracellular proteins resulting in their modification with a beta-linked N-acetylglucosamine (O-GlcNAc). Specifically glycosylates the Thr residue located between the fifth and sixth conserved cysteines of folded EGF-like domains. In Mus musculus (Mouse), this protein is EGF domain-specific O-linked N-acetylglucosamine transferase (Eogt).